Reading from the N-terminus, the 160-residue chain is UPF0178 protein PSPA7_5991 (160 aa).

This sequence belongs to the UPF0178 family.

This is UPF0178 protein PSPA7_5991 from Pseudomonas paraeruginosa (strain DSM 24068 / PA7) (Pseudomonas aeruginosa (strain PA7)).